The following is a 1523-amino-acid chain: uncharacterized protein (1523 aa).

The interval 1–89 (MLPTSSNNEE…GSSNMNPYDR (89 aa)) is disordered. 993-1000 (SPFGCGKS) provides a ligand contact to ATP. 2 stretches are compositionally biased toward polar residues: residues 1463–1476 (TSRQSKQQRANEYN) and 1485–1498 (QSNNDYGSQRSVTN). The disordered stretch occupies residues 1463-1498 (TSRQSKQQRANEYNSQHKHVKRQSNNDYGSQRSVTN).

The protein belongs to the DNA2/NAM7 helicase family.

This is an uncharacterized protein from Caenorhabditis elegans.